Consider the following 1690-residue polypeptide: Collagen alpha-4(IV) chain (1690 aa).

An N-terminal signal peptide occupies residues 1–38 (MWSLHIVLMRCSFRLTKSLATGPWSLILILFSVQYVYG). Residues 39-64 (SGKKYIGPCGGRDCSVCHCVPEKGSR) are 7S domain. Disordered regions lie at residues 61-173 (KGSR…GEKG) and 187-258 (GDRG…GPTL). A triple-helical region region spans residues 65–1459 (GPPGPPGPQG…IGDPGPKGFG (1395 aa)). Residues 66–75 (PPGPPGPQGP) are compositionally biased toward pro residues. Low complexity predominate over residues 76–88 (IGPLGAPGPIGLS). The Cell attachment site motif lies at 94-96 (RGD). Asn142 is a glycosylation site (N-linked (GlcNAc...) asparagine). Positions 145–147 (RGD) match the Cell attachment site motif. Gly residues predominate over residues 149-164 (GFPGGRGALGPGGPLG). The Cell attachment site motif lies at 189–191 (RGD). The span at 199-208 (GSWGAGGPAG) shows a compositional bias: gly residues. A Cell attachment site motif is present at residues 310-312 (RGD). Disordered regions lie at residues 369–390 (PGDP…PGPP), 405–451 (GPPG…GLQG), and 469–1457 (GIKG…GPKG). Positions 412-434 (FPGLPGLPGEAGIPGRPDSAPGK) are enriched in low complexity. Composition is skewed to pro residues over residues 498–507 (PMGPPGPPGL) and 529–540 (PGPPGAEGPPGL). Positions 586–607 (HGRDGHAGEKGDPGPPGDHEDA) are enriched in basic and acidic residues. A compositionally biased stretch (low complexity) spans 644-655 (PGVPGHPGVRGP). An N-linked (GlcNAc...) asparagine glycan is attached at Asn669. Over residues 681–690 (FDGPPGPKGF) the composition is skewed to pro residues. 2 short sequence motifs (cell attachment site) span residues 724 to 726 (RGD) and 785 to 787 (RGD). Residues 849-858 (GAPGGKGQPG) show a composition bias toward gly residues. Low complexity-rich tracts occupy residues 866–880 (AGMK…RPGA) and 907–917 (PRGLPGFPGFP). The Cell attachment site motif lies at 989-991 (RGD). A compositionally biased stretch (pro residues) spans 1023 to 1032 (PGPPGPPGPP). Positions 1108–1117 (PGIQGPRGSP) are enriched in low complexity. Residues 1119 to 1131 (RPGPPGSSGPPGC) are compositionally biased toward pro residues. A Cell attachment site motif is present at residues 1212–1214 (RGD). Composition is skewed to pro residues over residues 1220–1243 (ISPP…PPGP), 1256–1280 (DPGP…PPGL), 1297–1309 (PGPP…PGPP), 1338–1353 (FPGP…PPGR), and 1443–1452 (GPGPPGPIGD). The 226-residue stretch at 1465-1690 (GFLLVLHSQT…SRCQVCVKYS (226 aa)) folds into the Collagen IV NC1 domain. Intrachain disulfides connect Cys1480–Cys1569, Cys1513–Cys1566, Cys1525–Cys1531, Cys1588–Cys1686, Cys1622–Cys1683, and Cys1634–Cys1641.

This sequence belongs to the type IV collagen family. There are six type IV collagen isoforms, alpha 1(IV)-alpha 6(IV), each of which can form a triple helix structure with 2 other chains to generate type IV collagen network. The alpha 3(IV) chain forms a triple helical protomer with alpha 4(IV) and alpha 5(IV); this triple helical structure dimerizes through NC1-NC1 domain interactions such that the alpha 3(IV), alpha 4(IV) and alpha 5(IV) chains of one protomer connect with the alpha 5(IV), alpha 4(IV) and alpha 3(IV) chains of the opposite protomer, respectively. Associates with LAMB2 at the neuromuscular junction and in GBM. Prolines at the third position of the tripeptide repeating unit (G-X-Y) are hydroxylated in some or all of the chains. Post-translationally, type IV collagens contain numerous cysteine residues which are involved in inter- and intramolecular disulfide bonding. 12 of these, located in the NC1 domain, are conserved in all known type IV collagens. In terms of processing, the trimeric structure of the NC1 domains is stabilized by covalent bonds between Lys and Met residues. Expressed in Bruch's membrane, outer plexiform layer, inner nuclear layer, inner plexiform layer, ganglion cell layer, inner limiting membrane and around the blood vessels of the retina (at protein level). Alpha 3 and alpha 4 type IV collagens are colocalized and present in kidney, eye, basement membranes of lens capsule, cochlea, lung, skeletal muscle, aorta, synaptic fibers, fetal kidney and fetal lung. PubMed:8083201 reports similar levels of expression of alpha 3 and alpha 4 type IV collagens in kidney, but PubMed:7523402 reports that in kidney levels of alpha 3 type IV collagen are significantly lower than those of alpha 4 type IV collagen. Highest levels of expression of alpha 4 type IV collagen are detected in kidney, calvaria, neuroretina and cardiac muscle. Lower levels of expression are observed in brain, lung and thymus, and no expression is detected in choroid plexus, liver, adrenal, pancreas, ileum or skin.

The protein localises to the secreted. It localises to the extracellular space. The protein resides in the extracellular matrix. Its subcellular location is the basement membrane. Type IV collagen is the major structural component of glomerular basement membranes (GBM), forming a 'chicken-wire' meshwork together with laminins, proteoglycans and entactin/nidogen. The polypeptide is Collagen alpha-4(IV) chain (COL4A4) (Homo sapiens (Human)).